Reading from the N-terminus, the 531-residue chain is SWI/SNF-related matrix-associated actin-dependent regulator of chromatin subfamily D member 2 (531 aa).

A disordered region spans residues 20–85 (AVAAALGAPP…MSPGSRMPMA (66 aa)). A compositionally biased stretch (low complexity) spans 34-45 (PGMLPSPALRGP). Asymmetric dimethylarginine occurs at positions 81 and 104. Serine 203 bears the Phosphoserine mark. The disordered stretch occupies residues 205 to 226 (SKADGDNAGTAGTPGGTPAADK). Positions 210 to 225 (DNAGTAGTPGGTPAAD) are enriched in low complexity. Threonine 217 is subject to Phosphothreonine. A Glycyl lysine isopeptide (Lys-Gly) (interchain with G-Cter in SUMO2) cross-link involves residue lysine 226. The SWIB/MDM2 domain maps to 306–383 (HQPPQYKLDP…PMKLAGLLQH (78 aa)).

It belongs to the SMARCD family. Component of the multiprotein chromatin-remodeling complexes SWI/SNF: SWI/SNF-A (BAF), SWI/SNF-B (PBAF) and related complexes. The canonical complex contains a catalytic subunit (either SMARCA4/BRG1/BAF190A or SMARCA2/BRM/BAF190B), and at least SMARCE1, ACTL6A/BAF53, SMARCC1/BAF155, SMARCC2/BAF170, and SMARCB1/SNF5/BAF47. Other subunits specific to each of the complexes may also be present permitting several possible combinations developmentally and tissue specific. Component of the BAF complex, which includes at least actin (ACTB), ARID1A/BAF250A, ARID1B/BAF250B, SMARCA2/BRM, SMARCA4/BRG1, ACTL6A/BAF53, ACTL6B/BAF53B, SMARCE1/BAF57, SMARCC1/BAF155, SMARCC2/BAF170, SMARCB1/SNF5/INI1, and one or more SMARCD1/BAF60A, SMARCD2/BAF60B, or SMARCD3/BAF60C. In muscle cells, the BAF complex also contains DPF3. Component of the SWI/SNF-B (PBAF) chromatin remodeling complex, at least composed of SMARCA4/BRG1, SMARCB1/BAF47/SNF5, ACTL6A/BAF53A or ACTL6B/BAF53B, SMARCE1/BAF57, SMARCD1/BAF60A, SMARCD2/BAF60B, perhaps SMARCD3/BAF60C, SMARCC1/BAF155, SMARCC2/BAF170, PBRM1/BAF180, ARID2/BAF200 and actin (ACTB). Interacts with UNKL. Interacts with CEBPE. In terms of processing, ubiquitinated through a signaling process involving RAC1 and the RING finger protein UNKL.

It localises to the nucleus. Involved in transcriptional activation and repression of select genes by chromatin remodeling (alteration of DNA-nucleosome topology). Component of SWI/SNF chromatin remodeling complexes that carry out key enzymatic activities, changing chromatin structure by altering DNA-histone contacts within a nucleosome in an ATP-dependent manner. Critical regulator of myeloid differentiation, controlling granulocytopoiesis and the expression of genes involved in neutrophil granule formation. This chain is SWI/SNF-related matrix-associated actin-dependent regulator of chromatin subfamily D member 2 (Smarcd2), found in Mus musculus (Mouse).